We begin with the raw amino-acid sequence, 502 residues long: ATP synthase subunit alpha (502 aa).

169 to 176 lines the ATP pocket; sequence GDRQTGKT.

It belongs to the ATPase alpha/beta chains family. As to quaternary structure, F-type ATPases have 2 components, CF(1) - the catalytic core - and CF(0) - the membrane proton channel. CF(1) has five subunits: alpha(3), beta(3), gamma(1), delta(1), epsilon(1). CF(0) has three main subunits: a(1), b(2) and c(9-12). The alpha and beta chains form an alternating ring which encloses part of the gamma chain. CF(1) is attached to CF(0) by a central stalk formed by the gamma and epsilon chains, while a peripheral stalk is formed by the delta and b chains.

Its subcellular location is the cell inner membrane. The catalysed reaction is ATP + H2O + 4 H(+)(in) = ADP + phosphate + 5 H(+)(out). Produces ATP from ADP in the presence of a proton gradient across the membrane. The alpha chain is a regulatory subunit. The protein is ATP synthase subunit alpha of Geotalea daltonii (strain DSM 22248 / JCM 15807 / FRC-32) (Geobacter daltonii).